The sequence spans 366 residues: Phospho-N-acetylmuramoyl-pentapeptide-transferase (366 aa).

10 consecutive transmembrane segments (helical) span residues 27–47 (AALF…IASL), 71–91 (TPTM…LLWA), 93–113 (LSSI…AIGF), 138–158 (FVIA…AGAA), 174–194 (LMLN…VGAG), 205–225 (GLAI…AYLA), 245–265 (LAVI…FNAP), 268–288 (AIFM…TVAV), 297–317 (IIIG…VFWF), and 343–363 (QVVI…LSTL).

Belongs to the glycosyltransferase 4 family. MraY subfamily. Mg(2+) is required as a cofactor.

It localises to the cell inner membrane. It catalyses the reaction UDP-N-acetyl-alpha-D-muramoyl-L-alanyl-gamma-D-glutamyl-meso-2,6-diaminopimeloyl-D-alanyl-D-alanine + di-trans,octa-cis-undecaprenyl phosphate = di-trans,octa-cis-undecaprenyl diphospho-N-acetyl-alpha-D-muramoyl-L-alanyl-D-glutamyl-meso-2,6-diaminopimeloyl-D-alanyl-D-alanine + UMP. It participates in cell wall biogenesis; peptidoglycan biosynthesis. Functionally, catalyzes the initial step of the lipid cycle reactions in the biosynthesis of the cell wall peptidoglycan: transfers peptidoglycan precursor phospho-MurNAc-pentapeptide from UDP-MurNAc-pentapeptide onto the lipid carrier undecaprenyl phosphate, yielding undecaprenyl-pyrophosphoryl-MurNAc-pentapeptide, known as lipid I. This Rhizobium meliloti (strain 1021) (Ensifer meliloti) protein is Phospho-N-acetylmuramoyl-pentapeptide-transferase.